A 387-amino-acid chain; its full sequence is S-adenosylmethionine synthase (387 aa).

Position 15 (histidine 15) interacts with ATP. Aspartate 17 is a binding site for Mg(2+). Glutamate 43 lines the K(+) pocket. The L-methionine site is built by glutamate 56 and glutamine 99. Residues 99 to 109 (QSPDIAQGVNN) are flexible loop. ATP contacts are provided by residues 166 to 168 (DAK), 232 to 233 (RF), aspartate 241, 247 to 248 (RK), alanine 264, and lysine 268. L-methionine is bound at residue aspartate 241. Lysine 272 serves as a coordination point for L-methionine.

This sequence belongs to the AdoMet synthase family. Homotetramer; dimer of dimers. Mg(2+) is required as a cofactor. Requires K(+) as cofactor.

The protein localises to the cytoplasm. It catalyses the reaction L-methionine + ATP + H2O = S-adenosyl-L-methionine + phosphate + diphosphate. It functions in the pathway amino-acid biosynthesis; S-adenosyl-L-methionine biosynthesis; S-adenosyl-L-methionine from L-methionine: step 1/1. Catalyzes the formation of S-adenosylmethionine (AdoMet) from methionine and ATP. The overall synthetic reaction is composed of two sequential steps, AdoMet formation and the subsequent tripolyphosphate hydrolysis which occurs prior to release of AdoMet from the enzyme. This is S-adenosylmethionine synthase from Methylobacillus flagellatus (strain ATCC 51484 / DSM 6875 / VKM B-1610 / KT).